A 92-amino-acid polypeptide reads, in one-letter code: Small ribosomal subunit protein uS19 (92 aa).

Belongs to the universal ribosomal protein uS19 family.

Functionally, protein S19 forms a complex with S13 that binds strongly to the 16S ribosomal RNA. The polypeptide is Small ribosomal subunit protein uS19 (Variovorax paradoxus (strain S110)).